A 123-amino-acid polypeptide reads, in one-letter code: Large ribosomal subunit protein uL14c (123 aa).

It belongs to the universal ribosomal protein uL14 family. Part of the 50S ribosomal subunit.

It is found in the plastid. The protein resides in the chloroplast. Its function is as follows. Binds to 23S rRNA. The polypeptide is Large ribosomal subunit protein uL14c (Saccharum hybrid (Sugarcane)).